The primary structure comprises 127 residues: MFAVIKTGGKQYRVAPDDVLEIGKIDGEPGTIVQLNEVLVVGGDTPVLGVPAVAGASVAVEVLDHKRGPKVIAFKKRRRKNSRRKRGYRDELTLIRVSEILTDNAKPTKGPRPKKAKAEAPAADAAE.

Residues 102–127 (TDNAKPTKGPRPKKAKAEAPAADAAE) are disordered.

Belongs to the bacterial ribosomal protein bL21 family. Part of the 50S ribosomal subunit. Contacts protein L20.

Functionally, this protein binds to 23S rRNA in the presence of protein L20. This is Large ribosomal subunit protein bL21 from Bradyrhizobium sp. (strain BTAi1 / ATCC BAA-1182).